Reading from the N-terminus, the 307-residue chain is tRNA-cytidine(32) 2-sulfurtransferase (307 aa).

Positions 44–49 (SGGKDS) match the PP-loop motif motif. [4Fe-4S] cluster is bound by residues cysteine 119, cysteine 122, and cysteine 210.

Belongs to the TtcA family. In terms of assembly, homodimer. The cofactor is Mg(2+). It depends on [4Fe-4S] cluster as a cofactor.

Its subcellular location is the cytoplasm. The catalysed reaction is cytidine(32) in tRNA + S-sulfanyl-L-cysteinyl-[cysteine desulfurase] + AH2 + ATP = 2-thiocytidine(32) in tRNA + L-cysteinyl-[cysteine desulfurase] + A + AMP + diphosphate + H(+). The protein operates within tRNA modification. Its function is as follows. Catalyzes the ATP-dependent 2-thiolation of cytidine in position 32 of tRNA, to form 2-thiocytidine (s(2)C32). The sulfur atoms are provided by the cysteine/cysteine desulfurase (IscS) system. This chain is tRNA-cytidine(32) 2-sulfurtransferase, found in Aliivibrio salmonicida (strain LFI1238) (Vibrio salmonicida (strain LFI1238)).